Reading from the N-terminus, the 163-residue chain is NADH-quinone oxidoreductase subunit I (163 aa).

2 4Fe-4S ferredoxin-type domains span residues leucine 53–glycine 83 and valine 94–asparagine 123. Cysteine 63, cysteine 66, cysteine 69, cysteine 73, cysteine 103, cysteine 106, cysteine 109, and cysteine 113 together coordinate [4Fe-4S] cluster.

It belongs to the complex I 23 kDa subunit family. In terms of assembly, NDH-1 is composed of 14 different subunits. Subunits NuoA, H, J, K, L, M, N constitute the membrane sector of the complex. The cofactor is [4Fe-4S] cluster.

Its subcellular location is the cell inner membrane. The enzyme catalyses a quinone + NADH + 5 H(+)(in) = a quinol + NAD(+) + 4 H(+)(out). Its function is as follows. NDH-1 shuttles electrons from NADH, via FMN and iron-sulfur (Fe-S) centers, to quinones in the respiratory chain. The immediate electron acceptor for the enzyme in this species is believed to be ubiquinone. Couples the redox reaction to proton translocation (for every two electrons transferred, four hydrogen ions are translocated across the cytoplasmic membrane), and thus conserves the redox energy in a proton gradient. The polypeptide is NADH-quinone oxidoreductase subunit I (Bartonella henselae (strain ATCC 49882 / DSM 28221 / CCUG 30454 / Houston 1) (Rochalimaea henselae)).